An 836-amino-acid polypeptide reads, in one-letter code: RNA-binding protein 12B-A (836 aa).

In terms of domain architecture, RRM 1 spans 154–229 (PYLFLRGLPY…RFIEVMQGSE (76 aa)). The interval 237–277 (GTATEGGDTPRMRSEEHSPSRRINGRHFRKRSHSKSPRARS) is disordered. Positions 244 to 255 (DTPRMRSEEHSP) are enriched in basic and acidic residues. Residues 259-277 (INGRHFRKRSHSKSPRARS) are compositionally biased toward basic residues. RRM domains lie at 283–359 (FYVH…PVSR) and 401–478 (LCIY…LISE). Disordered stretches follow at residues 539 to 572 (GHFK…PWEE) and 620 to 644 (SQEH…RRSR). Residues 550–572 (QSDRRSPEDFRHSPEDYRHPWEE) show a composition bias toward basic and acidic residues. Position 703 is a phosphoserine (Ser703). At Lys758 the chain carries N6-acetyllysine. The RRM 4 domain maps to 760–836 (IPVKISNLPF…GPRKVKLSLL (77 aa)).

The sequence is that of RNA-binding protein 12B-A (Rbm12b1) from Mus musculus (Mouse).